The chain runs to 725 residues: Phosphoribosylformylglycinamidine synthase subunit PurL (725 aa).

Residue His-34 is part of the active site. Tyr-37 lines the ATP pocket. Glu-93 contributes to the Mg(2+) binding site. Substrate contacts are provided by residues 94–97 (SHNH) and Arg-116. Residue His-95 is the Proton acceptor of the active site. Asp-117 contacts Mg(2+). Positions 220 to 241 (GASFASEDLSEDAETEDRPAVQ) are disordered. Residue Gln-241 participates in substrate binding. Asp-269 is a binding site for Mg(2+). 313–315 (ESQ) contacts substrate. ATP-binding residues include Asp-489 and Gly-526. Residue Asn-527 coordinates Mg(2+). Position 529 (Ser-529) interacts with substrate.

Belongs to the FGAMS family. In terms of assembly, monomer. Part of the FGAM synthase complex composed of 1 PurL, 1 PurQ and 2 PurS subunits.

Its subcellular location is the cytoplasm. The enzyme catalyses N(2)-formyl-N(1)-(5-phospho-beta-D-ribosyl)glycinamide + L-glutamine + ATP + H2O = 2-formamido-N(1)-(5-O-phospho-beta-D-ribosyl)acetamidine + L-glutamate + ADP + phosphate + H(+). It functions in the pathway purine metabolism; IMP biosynthesis via de novo pathway; 5-amino-1-(5-phospho-D-ribosyl)imidazole from N(2)-formyl-N(1)-(5-phospho-D-ribosyl)glycinamide: step 1/2. Functionally, part of the phosphoribosylformylglycinamidine synthase complex involved in the purines biosynthetic pathway. Catalyzes the ATP-dependent conversion of formylglycinamide ribonucleotide (FGAR) and glutamine to yield formylglycinamidine ribonucleotide (FGAM) and glutamate. The FGAM synthase complex is composed of three subunits. PurQ produces an ammonia molecule by converting glutamine to glutamate. PurL transfers the ammonia molecule to FGAR to form FGAM in an ATP-dependent manner. PurS interacts with PurQ and PurL and is thought to assist in the transfer of the ammonia molecule from PurQ to PurL. The protein is Phosphoribosylformylglycinamidine synthase subunit PurL of Haloquadratum walsbyi (strain DSM 16790 / HBSQ001).